We begin with the raw amino-acid sequence, 196 residues long: GTP cyclohydrolase 1 (196 aa).

Zn(2+)-binding residues include cysteine 86, histidine 89, and cysteine 158.

It belongs to the GTP cyclohydrolase I family. In terms of assembly, homomer.

The catalysed reaction is GTP + H2O = 7,8-dihydroneopterin 3'-triphosphate + formate + H(+). It functions in the pathway cofactor biosynthesis; 7,8-dihydroneopterin triphosphate biosynthesis; 7,8-dihydroneopterin triphosphate from GTP: step 1/1. This is GTP cyclohydrolase 1 from Clostridium botulinum (strain Loch Maree / Type A3).